We begin with the raw amino-acid sequence, 470 residues long: Chromosomal replication initiator protein DnaA (470 aa).

The interval Met1–Ile89 is domain I, interacts with DnaA modulators. Positions Ile89–Pro130 are domain II. The segment at His131 to Ser348 is domain III, AAA+ region. Positions 176, 178, 179, and 180 each coordinate ATP. The interval Thr349–Ala470 is domain IV, binds dsDNA.

The protein belongs to the DnaA family. As to quaternary structure, oligomerizes as a right-handed, spiral filament on DNA at oriC.

Its subcellular location is the cytoplasm. In terms of biological role, plays an essential role in the initiation and regulation of chromosomal replication. ATP-DnaA binds to the origin of replication (oriC) to initiate formation of the DNA replication initiation complex once per cell cycle. Binds the DnaA box (a 9 base pair repeat at the origin) and separates the double-stranded (ds)DNA. Forms a right-handed helical filament on oriC DNA; dsDNA binds to the exterior of the filament while single-stranded (ss)DNA is stabiized in the filament's interior. The ATP-DnaA-oriC complex binds and stabilizes one strand of the AT-rich DNA unwinding element (DUE), permitting loading of DNA polymerase. After initiation quickly degrades to an ADP-DnaA complex that is not apt for DNA replication. Binds acidic phospholipids. In Bacteroides thetaiotaomicron (strain ATCC 29148 / DSM 2079 / JCM 5827 / CCUG 10774 / NCTC 10582 / VPI-5482 / E50), this protein is Chromosomal replication initiator protein DnaA.